Here is a 149-residue protein sequence, read N- to C-terminus: Acyl carrier protein 1, chloroplastic (149 aa).

The transit peptide at 1–59 (MAHCLAAVSSFSPSAVRRRLSSQVANVVSSRSSVSFHSRQMSFVSISSRPSSLRFKICC) directs the protein to the chloroplast. The region spanning 69–144 (KETVDKVCMI…DAANLIEKLV (76 aa)) is the Carrier domain. At S104 the chain carries O-(pantetheine 4'-phosphoryl)serine.

Belongs to the acyl carrier protein (ACP) family. Post-translationally, 4'-phosphopantetheine is transferred from CoA to a specific serine of apo-ACP by acpS. This modification is essential for activity because fatty acids are bound in thioester linkage to the sulfhydryl of the prosthetic group.

It is found in the plastid. It localises to the chloroplast. Its pathway is lipid metabolism; fatty acid biosynthesis. Its function is as follows. Carrier of the growing fatty acid chain in fatty acid biosynthesis. The chain is Acyl carrier protein 1, chloroplastic (ACL1.1) from Hordeum vulgare (Barley).